The primary structure comprises 66 residues: Phylloseptin-H5 (66 aa).

Positions 1-22 are cleaved as a signal peptide; sequence MAFLKKSLFLVLFLGLVSLSIC. Positions 23-44 are excised as a propeptide; the sequence is EEEKRETEEEENEQEDDDKSEE. The tract at residues 24 to 44 is disordered; sequence EEKRETEEEENEQEDDDKSEE. The span at 30 to 41 shows a compositional bias: acidic residues; that stretch reads EEEENEQEDDDK. Phenylalanine amide is present on Phe65.

As to expression, expressed by the skin glands.

It localises to the secreted. Has antibacterial activity against the Gram-negative bacteria E.coli and P.aeruginosa, and the Gram-positive bacterium S.aureus. No hemolytic activity. The polypeptide is Phylloseptin-H5 (psn7) (Pithecopus hypochondrialis (Orange-legged leaf frog)).